Consider the following 259-residue polypeptide: Proteasome subunit alpha (259 aa).

The protein belongs to the peptidase T1A family. The 20S proteasome core is composed of 14 alpha and 14 beta subunits that assemble into four stacked heptameric rings, resulting in a barrel-shaped structure. The two inner rings, each composed of seven catalytic beta subunits, are sandwiched by two outer rings, each composed of seven alpha subunits. The catalytic chamber with the active sites is on the inside of the barrel. Has a gated structure, the ends of the cylinder being occluded by the N-termini of the alpha-subunits. Is capped at one or both ends by the proteasome regulatory ATPase, PAN.

The protein localises to the cytoplasm. With respect to regulation, the formation of the proteasomal ATPase PAN-20S proteasome complex, via the docking of the C-termini of PAN into the intersubunit pockets in the alpha-rings, triggers opening of the gate for substrate entry. Interconversion between the open-gate and close-gate conformations leads to a dynamic regulation of the 20S proteasome proteolysis activity. Functionally, component of the proteasome core, a large protease complex with broad specificity involved in protein degradation. In Methanococcus maripaludis (strain DSM 14266 / JCM 13030 / NBRC 101832 / S2 / LL), this protein is Proteasome subunit alpha.